Consider the following 684-residue polypeptide: Histone-lysine N-methyltransferase SETMAR (684 aa).

The histone-lysine N-methyltransferase stretch occupies residues 1–345; the sequence is MFAEAAKTTR…RLTLETMKMM (345 aa). Residues 73 to 136 form the Pre-SET domain; sequence PGCICVKTPC…HCRNRVVQKG (64 aa). Positions 75, 77, 82, 87, 89, 118, 122, 124, and 128 each coordinate Zn(2+). In terms of domain architecture, SET spans 139-263; that stretch reads FHFQVFKTHK…PEEELSYDYS (125 aa). S-adenosyl-L-methionine is bound by residues 149–151, tyrosine 192, arginine 220, and 223–224; these read KGW and NH. Zn(2+)-binding residues include cysteine 226, cysteine 287, cysteine 289, and cysteine 294. Positions 283 to 299 constitute a Post-SET domain; that stretch reads LRKPCYCGAKSCTAFLP. Residues 346 to 684 form a mariner transposase Hsmar1 region; that stretch reads LDKKQIRAIF…CVDCNGSYFD (339 aa). 2 DNA-binding regions (H-T-H motif) span residues 364–395 and 428–448; these read KAAETTRNINNAFGPGTANERTVQWWFKKFCK and TTREVAEELNVNHSTVVRHLK. Aspartate 496 lines the Mg(2+) pocket. At lysine 498 the chain carries N6-methyllysine. Position 508 is a phosphoserine; by CHEK1 (serine 508). Aspartate 588 contributes to the Mg(2+) binding site.

This sequence in the N-terminal section; belongs to the class V-like SAM-binding methyltransferase superfamily. In the C-terminal section; belongs to the mariner transposase family. Homodimer. Interacts with PRPF19; required for SETMAR recruitment to damaged DNA sites. Interacts with PCNA. Interacts with TOP2A; stimulates TOP2A topoisomerase activity. May interact with RAD9A and/or RAD9B. Mg(2+) is required as a cofactor. Post-translationally, methylated. Methylation regulates activity in DNA decatenation. In terms of processing, phosphorylated at Ser-508 by CHEK1 and dephosphorylated by protein phosphatase 2A/PP2A. Phosphorylation at Ser-508 is enhanced by DNA damage and promotes recruitment to damaged DNA. It stimulates DNA repair and impairs replication fork restart. In terms of tissue distribution, widely expressed, with highest expression in placenta and ovary and lowest expression in skeletal muscle.

Its subcellular location is the nucleus. It is found in the chromosome. It carries out the reaction L-lysyl(36)-[histone H3] + 2 S-adenosyl-L-methionine = N(6),N(6)-dimethyl-L-lysyl(36)-[histone H3] + 2 S-adenosyl-L-homocysteine + 2 H(+). Protein derived from the fusion of a methylase with the transposase of an Hsmar1 transposon that plays a role in DNA double-strand break repair, stalled replication fork restart and DNA integration. DNA-binding protein, it is indirectly recruited to sites of DNA damage through protein-protein interactions. Also has kept a sequence-specific DNA-binding activity recognizing the 19-mer core of the 5'-terminal inverted repeats (TIRs) of the Hsmar1 element and displays a DNA nicking and end joining activity. In parallel, has a histone methyltransferase activity and methylates 'Lys-4' and 'Lys-36' of histone H3. Specifically mediates dimethylation of H3 'Lys-36' at sites of DNA double-strand break and may recruit proteins required for efficient DSB repair through non-homologous end-joining. Also regulates replication fork processing, promoting replication fork restart and regulating DNA decatenation through stimulation of the topoisomerase activity of TOP2A. The chain is Histone-lysine N-methyltransferase SETMAR from Homo sapiens (Human).